The sequence spans 268 residues: Tryptophan synthase alpha chain (268 aa).

Catalysis depends on proton acceptor residues Glu-49 and Asp-60.

Belongs to the TrpA family. Tetramer of two alpha and two beta chains.

It carries out the reaction (1S,2R)-1-C-(indol-3-yl)glycerol 3-phosphate + L-serine = D-glyceraldehyde 3-phosphate + L-tryptophan + H2O. It participates in amino-acid biosynthesis; L-tryptophan biosynthesis; L-tryptophan from chorismate: step 5/5. The alpha subunit is responsible for the aldol cleavage of indoleglycerol phosphate to indole and glyceraldehyde 3-phosphate. In Shigella sonnei (strain Ss046), this protein is Tryptophan synthase alpha chain.